A 122-amino-acid polypeptide reads, in one-letter code: S-adenosylmethionine decarboxylase proenzyme (122 aa).

Ser-69 (schiff-base intermediate with substrate; via pyruvic acid) is an active-site residue. At Ser-69 the chain carries Pyruvic acid (Ser); by autocatalysis. The active-site Proton acceptor; for processing activity is His-74. Catalysis depends on Cys-89, which acts as the Proton donor; for catalytic activity.

The protein belongs to the prokaryotic AdoMetDC family. Type 1 subfamily. In terms of assembly, heterotetramer of two alpha and two beta chains arranged as a dimer of alpha/beta heterodimers. The cofactor is pyruvate. In terms of processing, is synthesized initially as an inactive proenzyme. Formation of the active enzyme involves a self-maturation process in which the active site pyruvoyl group is generated from an internal serine residue via an autocatalytic post-translational modification. Two non-identical subunits are generated from the proenzyme in this reaction, and the pyruvate is formed at the N-terminus of the alpha chain, which is derived from the carboxyl end of the proenzyme. The post-translation cleavage follows an unusual pathway, termed non-hydrolytic serinolysis, in which the side chain hydroxyl group of the serine supplies its oxygen atom to form the C-terminus of the beta chain, while the remainder of the serine residue undergoes an oxidative deamination to produce ammonia and the pyruvoyl group blocking the N-terminus of the alpha chain.

It catalyses the reaction S-adenosyl-L-methionine + H(+) = S-adenosyl 3-(methylsulfanyl)propylamine + CO2. Its pathway is amine and polyamine biosynthesis; S-adenosylmethioninamine biosynthesis; S-adenosylmethioninamine from S-adenosyl-L-methionine: step 1/1. Functionally, catalyzes the decarboxylation of S-adenosylmethionine to S-adenosylmethioninamine (dcAdoMet), the propylamine donor required for the synthesis of the polyamines spermine and spermidine from the diamine putrescine. This is S-adenosylmethionine decarboxylase proenzyme from Saccharolobus islandicus (strain L.S.2.15 / Lassen #1) (Sulfolobus islandicus).